A 207-amino-acid chain; its full sequence is Small ribosomal subunit protein uS4 (207 aa).

Residues 31–56 (KCKLDSKPGQHGRTSGARTSDYGNQL) are disordered. Residues 42-53 (GRTSGARTSDYG) are compositionally biased toward polar residues. The S4 RNA-binding domain maps to 97 to 157 (TRLDNVVYRM…EKSKKQVRIV (61 aa)).

Belongs to the universal ribosomal protein uS4 family. Part of the 30S ribosomal subunit. Contacts protein S5. The interaction surface between S4 and S5 is involved in control of translational fidelity.

In terms of biological role, one of the primary rRNA binding proteins, it binds directly to 16S rRNA where it nucleates assembly of the body of the 30S subunit. Its function is as follows. With S5 and S12 plays an important role in translational accuracy. This Herminiimonas arsenicoxydans protein is Small ribosomal subunit protein uS4.